A 123-amino-acid polypeptide reads, in one-letter code: Fluoride-specific ion channel FluC 1 (123 aa).

A run of 3 helical transmembrane segments spans residues 33–53 (TFLI…LFGV), 59–79 (YGTM…TTFS), and 98–118 (VFYL…GAML). Na(+)-binding residues include Gly-73 and Thr-76.

The protein belongs to the fluoride channel Fluc/FEX (TC 1.A.43) family.

It localises to the cell inner membrane. It catalyses the reaction fluoride(in) = fluoride(out). With respect to regulation, na(+) is not transported, but it plays an essential structural role and its presence is essential for fluoride channel function. Fluoride-specific ion channel. Important for reducing fluoride concentration in the cell, thus reducing its toxicity. The sequence is that of Fluoride-specific ion channel FluC 1 from Brucella melitensis biotype 1 (strain ATCC 23456 / CCUG 17765 / NCTC 10094 / 16M).